The chain runs to 448 residues: Probable glycine dehydrogenase (decarboxylating) subunit 1 (448 aa).

Belongs to the GcvP family. N-terminal subunit subfamily. The glycine cleavage system is composed of four proteins: P, T, L and H. In this organism, the P 'protein' is a heterodimer of two subunits.

The enzyme catalyses N(6)-[(R)-lipoyl]-L-lysyl-[glycine-cleavage complex H protein] + glycine + H(+) = N(6)-[(R)-S(8)-aminomethyldihydrolipoyl]-L-lysyl-[glycine-cleavage complex H protein] + CO2. Functionally, the glycine cleavage system catalyzes the degradation of glycine. The P protein binds the alpha-amino group of glycine through its pyridoxal phosphate cofactor; CO(2) is released and the remaining methylamine moiety is then transferred to the lipoamide cofactor of the H protein. The chain is Probable glycine dehydrogenase (decarboxylating) subunit 1 from Exiguobacterium sibiricum (strain DSM 17290 / CCUG 55495 / CIP 109462 / JCM 13490 / 255-15).